Here is a 143-residue protein sequence, read N- to C-terminus: 3-hydroxyacyl-[acyl-carrier-protein] dehydratase FabZ (143 aa).

The active site involves H47.

It belongs to the thioester dehydratase family. FabZ subfamily.

The protein resides in the cytoplasm. It carries out the reaction a (3R)-hydroxyacyl-[ACP] = a (2E)-enoyl-[ACP] + H2O. In terms of biological role, involved in unsaturated fatty acids biosynthesis. Catalyzes the dehydration of short chain beta-hydroxyacyl-ACPs and long chain saturated and unsaturated beta-hydroxyacyl-ACPs. This chain is 3-hydroxyacyl-[acyl-carrier-protein] dehydratase FabZ, found in Rickettsia canadensis (strain McKiel).